A 105-amino-acid polypeptide reads, in one-letter code: Thioredoxin (105 aa).

One can recognise a Thioredoxin domain in the interval 2–105 (VKSVGNLADF…KLEETIKSLV (104 aa)). Active-site nucleophile residues include Cys32 and Cys35. Cys32 and Cys35 are oxidised to a cystine. Cys69 and Cys73 each carry S-nitrosocysteine.

Belongs to the thioredoxin family. May be nitrosylated on several cysteine residues, depending on the oxidation state. Nitrosylated Cys-73 may serve as donor for nitrosylation of target proteins.

The protein resides in the nucleus. The protein localises to the cytoplasm. It localises to the secreted. Functionally, participates in various redox reactions through the reversible oxidation of its active center dithiol to a disulfide and catalyzes dithiol-disulfide exchange reactions. Plays a role in the reversible S-nitrosylation of cysteine residues in target proteins, and thereby contributes to the response to intracellular nitric oxide. Nitrosylates the active site Cys of CASP3 in response to nitric oxide (NO), and thereby inhibits caspase-3 activity. Induces the FOS/JUN AP-1 DNA binding activity in ionizing radiation (IR) cells through its oxidation/reduction status and stimulates AP-1 transcriptional activity. This is Thioredoxin (TXN) from Gallus gallus (Chicken).